The chain runs to 338 residues: Anthranilate phosphoribosyltransferase (338 aa).

Residues glycine 81, 84–85, threonine 89, 91–94, 109–117, and alanine 121 contribute to the 5-phospho-alpha-D-ribose 1-diphosphate site; these read GD, NIST, and KHGNRNLSS. Glycine 81 provides a ligand contact to anthranilate. Serine 93 provides a ligand contact to Mg(2+). Asparagine 112 contributes to the anthranilate binding site. Arginine 167 contacts anthranilate. The Mg(2+) site is built by aspartate 226 and glutamate 227.

Belongs to the anthranilate phosphoribosyltransferase family. As to quaternary structure, homodimer. It depends on Mg(2+) as a cofactor.

It catalyses the reaction N-(5-phospho-beta-D-ribosyl)anthranilate + diphosphate = 5-phospho-alpha-D-ribose 1-diphosphate + anthranilate. It functions in the pathway amino-acid biosynthesis; L-tryptophan biosynthesis; L-tryptophan from chorismate: step 2/5. Catalyzes the transfer of the phosphoribosyl group of 5-phosphorylribose-1-pyrophosphate (PRPP) to anthranilate to yield N-(5'-phosphoribosyl)-anthranilate (PRA). In Cereibacter sphaeroides (strain ATCC 17025 / ATH 2.4.3) (Rhodobacter sphaeroides), this protein is Anthranilate phosphoribosyltransferase.